The primary structure comprises 464 residues: UDP-N-acetylmuramoylalanine--D-glutamate ligase (464 aa).

Residue 112-118 (GTDGKTT) coordinates ATP.

The protein belongs to the MurCDEF family.

The protein localises to the cytoplasm. It carries out the reaction UDP-N-acetyl-alpha-D-muramoyl-L-alanine + D-glutamate + ATP = UDP-N-acetyl-alpha-D-muramoyl-L-alanyl-D-glutamate + ADP + phosphate + H(+). It functions in the pathway cell wall biogenesis; peptidoglycan biosynthesis. Functionally, cell wall formation. Catalyzes the addition of glutamate to the nucleotide precursor UDP-N-acetylmuramoyl-L-alanine (UMA). This chain is UDP-N-acetylmuramoylalanine--D-glutamate ligase, found in Chlorobium phaeobacteroides (strain DSM 266 / SMG 266 / 2430).